Reading from the N-terminus, the 238-residue chain is Pyridoxine 5'-phosphate synthase (238 aa).

N9 lines the 3-amino-2-oxopropyl phosphate pocket. 1-deoxy-D-xylulose 5-phosphate is bound at residue 11-12; the sequence is DH. Position 20 (R20) interacts with 3-amino-2-oxopropyl phosphate. The active-site Proton acceptor is the H45. 2 residues coordinate 1-deoxy-D-xylulose 5-phosphate: R47 and H52. Residue E72 is the Proton acceptor of the active site. 1-deoxy-D-xylulose 5-phosphate is bound at residue T102. Catalysis depends on H189, which acts as the Proton donor. Residues G190 and 211–212 each bind 3-amino-2-oxopropyl phosphate; that span reads GH.

The protein belongs to the PNP synthase family. In terms of assembly, homooctamer; tetramer of dimers.

Its subcellular location is the cytoplasm. It catalyses the reaction 3-amino-2-oxopropyl phosphate + 1-deoxy-D-xylulose 5-phosphate = pyridoxine 5'-phosphate + phosphate + 2 H2O + H(+). It functions in the pathway cofactor biosynthesis; pyridoxine 5'-phosphate biosynthesis; pyridoxine 5'-phosphate from D-erythrose 4-phosphate: step 5/5. Its function is as follows. Catalyzes the complicated ring closure reaction between the two acyclic compounds 1-deoxy-D-xylulose-5-phosphate (DXP) and 3-amino-2-oxopropyl phosphate (1-amino-acetone-3-phosphate or AAP) to form pyridoxine 5'-phosphate (PNP) and inorganic phosphate. This Ehrlichia ruminantium (strain Gardel) protein is Pyridoxine 5'-phosphate synthase.